The sequence spans 333 residues: Phosphoenolpyruvate transferase (333 aa).

Asp65 is a 7,8-didemethyl-8-hydroxy-5-deazariboflavin binding site.

The protein belongs to the CofD family. In terms of assembly, homodimer. Mg(2+) is required as a cofactor.

The enzyme catalyses enolpyruvoyl-2-diphospho-5'-guanosine + 7,8-didemethyl-8-hydroxy-5-deazariboflavin = dehydro coenzyme F420-0 + GMP + H(+). It functions in the pathway cofactor biosynthesis; coenzyme F420 biosynthesis. Catalyzes the transfer of the phosphoenolpyruvate moiety from enoylpyruvoyl-2-diphospho-5'-guanosine (EPPG) to 7,8-didemethyl-8-hydroxy-5-deazariboflavin (FO) with the formation of dehydro coenzyme F420-0 and GMP. In Mycobacterium leprae (strain TN), this protein is Phosphoenolpyruvate transferase.